The following is a 55-amino-acid chain: Large ribosomal subunit protein bL33 (55 aa).

Belongs to the bacterial ribosomal protein bL33 family.

The chain is Large ribosomal subunit protein bL33 from Methylocella silvestris (strain DSM 15510 / CIP 108128 / LMG 27833 / NCIMB 13906 / BL2).